Consider the following 381-residue polypeptide: Cytochrome b (381 aa).

A run of 4 helical transmembrane segments spans residues 33-53, 77-98, 113-133, and 178-198; these read FGSL…FLAM, WLLR…FLHV, WNIG…GYVL, and FFAF…VHLL. Residues His83 and His97 each contribute to the heme b site. Residues His182 and His196 each contribute to the heme b site. His201 lines the a ubiquinone pocket. 4 consecutive transmembrane segments (helical) span residues 226-246, 288-308, 320-340, and 347-367; these read IKDA…ALFS, LGGV…PLLH, ISQT…WIGG, and FIII…VLMP.

Belongs to the cytochrome b family. In terms of assembly, the cytochrome bc1 complex contains 11 subunits: 3 respiratory subunits (MT-CYB, CYC1 and UQCRFS1), 2 core proteins (UQCRC1 and UQCRC2) and 6 low-molecular weight proteins (UQCRH/QCR6, UQCRB/QCR7, UQCRQ/QCR8, UQCR10/QCR9, UQCR11/QCR10 and a cleavage product of UQCRFS1). This cytochrome bc1 complex then forms a dimer. Requires heme b as cofactor.

It is found in the mitochondrion inner membrane. Component of the ubiquinol-cytochrome c reductase complex (complex III or cytochrome b-c1 complex) that is part of the mitochondrial respiratory chain. The b-c1 complex mediates electron transfer from ubiquinol to cytochrome c. Contributes to the generation of a proton gradient across the mitochondrial membrane that is then used for ATP synthesis. The sequence is that of Cytochrome b (MT-CYB) from Pseudantechinus bilarni (Sandstone dibbler).